Consider the following 273-residue polypeptide: Polyamine aminopropyltransferase (273 aa).

The region spanning 5–238 (ENWFSERYSD…GFWSFTIASE (234 aa)) is the PABS domain. Residue Q34 coordinates S-methyl-5'-thioadenosine. Positions 65 and 90 each coordinate spermidine. S-methyl-5'-thioadenosine is bound by residues E109 and 140–141 (DG). Catalysis depends on D158, which acts as the Proton acceptor. 158–161 (DSTD) provides a ligand contact to spermidine. P165 contributes to the S-methyl-5'-thioadenosine binding site.

The protein belongs to the spermidine/spermine synthase family. As to quaternary structure, homodimer or homotetramer.

Its subcellular location is the cytoplasm. It carries out the reaction S-adenosyl 3-(methylsulfanyl)propylamine + putrescine = S-methyl-5'-thioadenosine + spermidine + H(+). It functions in the pathway amine and polyamine biosynthesis; spermidine biosynthesis; spermidine from putrescine: step 1/1. Its function is as follows. Catalyzes the irreversible transfer of a propylamine group from the amino donor S-adenosylmethioninamine (decarboxy-AdoMet) to putrescine (1,4-diaminobutane) to yield spermidine. The chain is Polyamine aminopropyltransferase from Thermoplasma volcanium (strain ATCC 51530 / DSM 4299 / JCM 9571 / NBRC 15438 / GSS1).